A 369-amino-acid chain; its full sequence is Maltose/maltodextrin import ATP-binding protein MalK (369 aa).

The 231-residue stretch at 4–234 (VTLSSVYKAF…PANRFVAGFI (231 aa)) folds into the ABC transporter domain. Position 36-43 (36-43 (GPSGCGKS)) interacts with ATP.

It belongs to the ABC transporter superfamily. Maltooligosaccharide importer (TC 3.A.1.1.1) family. As to quaternary structure, the complex is composed of two ATP-binding proteins (MalK), two transmembrane proteins (MalG and MalK) and a solute-binding protein (MalE).

The protein resides in the cell inner membrane. It catalyses the reaction D-maltose(out) + ATP + H2O = D-maltose(in) + ADP + phosphate + H(+). In terms of biological role, part of the ABC transporter complex MalEFGK involved in maltose/maltodextrin import. Responsible for energy coupling to the transport system. This Yersinia pestis bv. Antiqua (strain Antiqua) protein is Maltose/maltodextrin import ATP-binding protein MalK.